The chain runs to 365 residues: Spermidine/putrescine import ATP-binding protein PotA (365 aa).

An ABC transporter domain is found at 7-237 (LTLADITKRF…PNNLFVASFI (231 aa)). 39–46 (GPSGCGKT) contacts ATP.

The protein belongs to the ABC transporter superfamily. Spermidine/putrescine importer (TC 3.A.1.11.1) family. In terms of assembly, the complex is composed of two ATP-binding proteins (PotA), two transmembrane proteins (PotB and PotC) and a solute-binding protein (PotD).

It is found in the cell inner membrane. The enzyme catalyses ATP + H2O + polyamine-[polyamine-binding protein]Side 1 = ADP + phosphate + polyamineSide 2 + [polyamine-binding protein]Side 1.. In terms of biological role, part of the ABC transporter complex PotABCD involved in spermidine/putrescine import. Responsible for energy coupling to the transport system. The chain is Spermidine/putrescine import ATP-binding protein PotA from Hahella chejuensis (strain KCTC 2396).